A 305-amino-acid polypeptide reads, in one-letter code: MTAEKPGLHPRNRHRSRYDMNALCQSCPQLQAFIVQTPAGEPSVNFADPLAVKALNKALLAHFYGVTQWDIPEGFLCPPVPGRADYVHHLADLLAEDNAGTIPPQATVLDIGTGANLIYPLIGVAEYGWRFTGSETGKDAYASAQAIVNGNEGLTRAIRLRRQKEASDIFNGIIHKNESYDATMCNPPFHDSAETARAGSERKRRNLGQAEDGALNFGGQQHELWCEGGEVAFIEKMIAESKLFARQVKWFTTLVSRGDNLPPLYRALTAVGAVKVVKKEMAQGQKQSRFIAWTFMDDAKRRKSF.

This sequence belongs to the methyltransferase superfamily. METTL16/RlmF family.

It is found in the cytoplasm. It catalyses the reaction adenosine(1618) in 23S rRNA + S-adenosyl-L-methionine = N(6)-methyladenosine(1618) in 23S rRNA + S-adenosyl-L-homocysteine + H(+). Specifically methylates the adenine in position 1618 of 23S rRNA. In Enterobacter sp. (strain 638), this protein is Ribosomal RNA large subunit methyltransferase F.